A 79-amino-acid chain; its full sequence is Ribonuclease P protein component 1 (79 aa).

The protein belongs to the eukaryotic/archaeal RNase P protein component 1 family. Consists of a catalytic RNA component and at least 4-5 protein subunits.

The protein localises to the cytoplasm. It carries out the reaction Endonucleolytic cleavage of RNA, removing 5'-extranucleotides from tRNA precursor.. Its function is as follows. Part of ribonuclease P, a protein complex that generates mature tRNA molecules by cleaving their 5'-ends. This Saccharolobus solfataricus (strain ATCC 35092 / DSM 1617 / JCM 11322 / P2) (Sulfolobus solfataricus) protein is Ribonuclease P protein component 1.